Reading from the N-terminus, the 248-residue chain is Pyridoxine 5'-phosphate synthase (248 aa).

Residue Asn-11 coordinates 3-amino-2-oxopropyl phosphate. Residue 13–14 (DH) participates in 1-deoxy-D-xylulose 5-phosphate binding. Arg-22 serves as a coordination point for 3-amino-2-oxopropyl phosphate. His-47 functions as the Proton acceptor in the catalytic mechanism. 1-deoxy-D-xylulose 5-phosphate-binding residues include Arg-49 and His-54. Glu-74 functions as the Proton acceptor in the catalytic mechanism. Thr-104 contributes to the 1-deoxy-D-xylulose 5-phosphate binding site. The active-site Proton donor is His-198. 3-amino-2-oxopropyl phosphate contacts are provided by residues Gly-199 and 220 to 221 (GH).

Belongs to the PNP synthase family. As to quaternary structure, homooctamer; tetramer of dimers.

The protein localises to the cytoplasm. It carries out the reaction 3-amino-2-oxopropyl phosphate + 1-deoxy-D-xylulose 5-phosphate = pyridoxine 5'-phosphate + phosphate + 2 H2O + H(+). The protein operates within cofactor biosynthesis; pyridoxine 5'-phosphate biosynthesis; pyridoxine 5'-phosphate from D-erythrose 4-phosphate: step 5/5. Catalyzes the complicated ring closure reaction between the two acyclic compounds 1-deoxy-D-xylulose-5-phosphate (DXP) and 3-amino-2-oxopropyl phosphate (1-amino-acetone-3-phosphate or AAP) to form pyridoxine 5'-phosphate (PNP) and inorganic phosphate. This chain is Pyridoxine 5'-phosphate synthase, found in Ruegeria pomeroyi (strain ATCC 700808 / DSM 15171 / DSS-3) (Silicibacter pomeroyi).